A 79-amino-acid polypeptide reads, in one-letter code: Dermaseptin-S8 (79 aa).

Positions 1–22 (MDILKKSLFLVLFLGLVSLSIC) are cleaved as a signal peptide. A propeptide spanning residues 23–45 (EEEKRENEDEEKQEDDEQSEMKR) is cleaved from the precursor. Q76 carries the glutamine amide modification. The propeptide occupies 78-79 (AQ).

It belongs to the frog skin active peptide (FSAP) family. Dermaseptin subfamily. In terms of tissue distribution, expressed by the skin glands.

Its subcellular location is the secreted. Its function is as follows. Potent antimicrobial peptide with activity against bacteria, fungi and protozoa. Probably acts by disturbing membrane functions with its amphipathic structure. This chain is Dermaseptin-S8, found in Phyllomedusa sauvagei (Sauvage's leaf frog).